Reading from the N-terminus, the 993-residue chain is Ephrin type-B receptor 3 (993 aa).

The first 29 residues, 1–29, serve as a signal peptide directing secretion; that stretch reads MAGARPPPGLLPLLAPLLLPLLLPAGCWA. Residues 30-554 are Extracellular-facing; the sequence is LEETLMDTKW…AQQLQEQLPL (525 aa). One can recognise an Eph LBD domain in the interval 31 to 209; sequence EETLMDTKWV…FYKKCASTTA (179 aa). A disulfide bridge links Cys73 with Cys191. Fibronectin type-III domains are found at residues 331-446 and 447-540; these read VPSP…TNQA and APSE…TTSE. Asn343 and Asn440 each carry an N-linked (GlcNAc...) asparagine glycan. The chain crosses the membrane as a helical span at residues 555-575; that stretch reads IVGSTVAGFVFMVVVVVIALV. Residues 576-993 lie on the Cytoplasmic side of the membrane; that stretch reads CLRKQRHGPD…QMNQTLPVQV (418 aa). Phosphotyrosine; by autocatalysis is present on Tyr609. One can recognise a Protein kinase domain in the interval 628 to 891; sequence VKIEEVIGAG…QIVNTLDKLI (264 aa). Residues 634–642 and Lys660 contribute to the ATP site; that span reads IGAGEFGEV. Asp753 (proton acceptor) is an active-site residue. The 65-residue stretch at 920–984 folds into the SAM domain; it reads TTFTTVGDWL…LCSIQDMRLQ (65 aa). The PDZ-binding motif lies at 991-993; that stretch reads VQV.

This sequence belongs to the protein kinase superfamily. Tyr protein kinase family. Ephrin receptor subfamily. Heterotetramer upon binding of the ligand. The heterotetramer is composed of an ephrin dimer and a receptor dimer. Oligomerization is probably required to induce biological responses. In terms of processing, phosphorylated. Autophosphorylates upon ligand-binding. Autophosphorylation on Tyr-609 is required for interaction with SH2 domain-containing proteins. Ubiquitinated by RNF186, mainly through 'Lys-48' and 'Lys-63'-linked polyubiquitin chains. Expressed in cells of the retinal ganglion cell layer during retinal axon guidance to the optic disk. Expressed by Paneth and progenitor cells in the crypts of the intestinal epithelium (at protein level). Expressed in myogenic progenitor cells.

The protein resides in the cell membrane. The protein localises to the cell projection. Its subcellular location is the dendrite. It catalyses the reaction L-tyrosyl-[protein] + ATP = O-phospho-L-tyrosyl-[protein] + ADP + H(+). Functionally, receptor tyrosine kinase which binds promiscuously transmembrane ephrin-B family ligands residing on adjacent cells, leading to contact-dependent bidirectional signaling into neighboring cells. The signaling pathway downstream of the receptor is referred to as forward signaling while the signaling pathway downstream of the ephrin ligand is referred to as reverse signaling. Generally has an overlapping and redundant function with EPHB2. Like EPHB2, functions in axon guidance during development regulating for instance the neurons forming the corpus callosum and the anterior commissure, 2 major interhemispheric connections between the temporal lobes of the cerebral cortex. In addition to its role in axon guidance also plays an important redundant role with other ephrin-B receptors in development and maturation of dendritic spines and the formation of excitatory synapses. Controls other aspects of development through regulation of cell migration and positioning. This includes angiogenesis, palate development and thymic epithelium development for instance. Forward and reverse signaling through the EFNB2/EPHB3 complex also regulate migration and adhesion of cells that tubularize the urethra and septate the cloaca. Finally, plays an important role in intestinal epithelium differentiation segregating progenitor from differentiated cells in the crypt. The sequence is that of Ephrin type-B receptor 3 (Ephb3) from Mus musculus (Mouse).